The sequence spans 564 residues: Ubiquitin carboxyl-terminal hydrolase 39 (564 aa).

The disordered stretch occupies residues 1–96 (MSSRSKRQSH…VRAKNGRVDS (96 aa)). A compositionally biased stretch (basic and acidic residues) spans 28-39 (IKKERDREKEPE). At serine 46 the chain carries Phosphoserine. Lysine 51 is covalently cross-linked (Glycyl lysine isopeptide (Lys-Gly) (interchain with G-Cter in SUMO2)). Low complexity predominate over residues 59–69 (REVPAPALPVV). Serine 81 carries the post-translational modification Phosphoserine. Residues 84-96 (EREVRAKNGRVDS) are compositionally biased toward basic and acidic residues. The segment at 102 to 199 (RHCPYLDTIN…YVLKPTFTKQ (98 aa)) adopts a UBP-type; degenerate zinc-finger fold. Cysteine 135, cysteine 138, histidine 154, and histidine 160 together coordinate Zn(2+). Residues 224–554 (VGLNNIKAND…EAYIQIWKRR (331 aa)) form the USP domain.

This sequence belongs to the peptidase C19 family. As to quaternary structure, the U4/U6-U5 tri-snRNP complex is a building block of the precatalytic spliceosome (spliceosome B complex). Component of the U4/U6-U5 tri-snRNP complex composed of the U4, U6 and U5 snRNAs and at least PRPF3, PRPF4, PRPF6, PRPF8, PRPF31, SNRNP200, TXNL4A, SNRNP40, SNRPB, SNRPD1, SNRPD2, SNRPD3, SNRPE, SNRPF, SNRPG, DDX23, CD2BP2, PPIH, SNU13, EFTUD2, SART1 and USP39, plus LSM2, LSM3, LSM4, LSM5, LSM6, LSM7 and LSM8.

The protein resides in the nucleus. It carries out the reaction Thiol-dependent hydrolysis of ester, thioester, amide, peptide and isopeptide bonds formed by the C-terminal Gly of ubiquitin (a 76-residue protein attached to proteins as an intracellular targeting signal).. Its function is as follows. Deubiquitinating enzyme that plays a role in many cellular processes including cellular antiviral response, epithelial morphogenesis, DNA repair or B-cell development. Plays a role in pre-mRNA splicing as a component of the U4/U6-U5 tri-snRNP, one of the building blocks of the precatalytic spliceosome. Specifically regulates immunoglobulin gene rearrangement in a spliceosome-dependent manner, which involves modulating chromatin interactions at the Igh locus and therefore plays an essential role in B-cell development. Regulates AURKB mRNA levels, and thereby plays a role in cytokinesis and in the spindle checkpoint. Regulates apoptosis and G2/M cell cycle checkpoint in response to DNA damage by deubiquitinating and stabilizing CHK2. Also plays an important role in DNA repair by controlling the recruitment of XRCC4/LIG4 to DNA double-strand breaks for non-homologous end-joining repair. Participates in antiviral activity by affecting the type I IFN signaling by stabilizing STAT1 and decreasing its 'Lys-6'-linked ubiquitination. Contributes to non-canonical Wnt signaling during epidermal differentiation. Acts as a negative regulator NF-kappa-B activation through deubiquitination of 'Lys-48'-linked ubiquitination of NFKBIA. This is Ubiquitin carboxyl-terminal hydrolase 39 from Mus musculus (Mouse).